The sequence spans 303 residues: DCN1-like protein 3 (303 aa).

Positions 1 to 40 (MGQCVTKCKNPSSTLGSKNGERESSKPHKRSSSHKEEHMS) are disordered. G2 carries the N-myristoyl glycine lipid modification. Residues 85-277 (SSLQRIEELF…LFDTFVEWEM (193 aa)) form the DCUN1 domain.

In terms of assembly, may interact (via the DCUN1 domain) with unneddylated cullins.

The protein resides in the cell membrane. The protein localises to the cytoplasm. It is found in the nucleus. Its subcellular location is the perinuclear region. In terms of biological role, contributes to the neddylation of all cullins by transferring NEDD8 from N-terminally acetylated NEDD8-conjugating E2s enzyme to different cullin C-terminal domain-RBX complexes. At the cell membrane, can promote and as well inhibit cullins neddylation. The chain is DCN1-like protein 3 from Xenopus laevis (African clawed frog).